The sequence spans 119 residues: Holo-[acyl-carrier-protein] synthase (119 aa).

Residues Asp-8 and Glu-59 each contribute to the Mg(2+) site.

Belongs to the P-Pant transferase superfamily. AcpS family. The cofactor is Mg(2+).

The protein localises to the cytoplasm. It catalyses the reaction apo-[ACP] + CoA = holo-[ACP] + adenosine 3',5'-bisphosphate + H(+). Its function is as follows. Transfers the 4'-phosphopantetheine moiety from coenzyme A to a Ser of acyl-carrier-protein. The chain is Holo-[acyl-carrier-protein] synthase from Lactococcus lactis subsp. cremoris (strain SK11).